The chain runs to 385 residues: MTQAFNERIAQALKQRREQGLSRQSEVIFSGNQTVLEHQGKRYLNFSANDYLGLANDQSLVRAWQQGLSLYGCGSGASPLVTGYTPAHSNLAASLCDWLGYESATLFGSGFSANQALLFALLEKGDLLVQDKLNHASLIEAGLLSPATMKRFKHNDLKALDTILNRSDCPSLVVTEGVFSMDGDCSPLAEMHALTQRHSASLMVDDAHGVGVLGEEGRGSCALASVKPDFLVVTFGKAFGLSGAALLTDKSSGDFLAQFARHHVYSTALPPAQAFALTHAVEMIRTQQWRRDKLNELQTLFAEYLGEHDSFVATQTPIKPWLIGETQQAVMVAQRCREQGIWLTAIRPPTVPQNTARLRITLSANHTKEQMHTLAQVLLTVTGEH.

Position 23 (Arg-23) interacts with substrate. A pyridoxal 5'-phosphate-binding site is contributed by 110-111 (GF). His-135 serves as a coordination point for substrate. Ser-180, His-208, and Thr-234 together coordinate pyridoxal 5'-phosphate. Lys-237 is subject to N6-(pyridoxal phosphate)lysine. Thr-350 contacts substrate.

This sequence belongs to the class-II pyridoxal-phosphate-dependent aminotransferase family. BioF subfamily. Homodimer. Pyridoxal 5'-phosphate serves as cofactor.

The catalysed reaction is 6-carboxyhexanoyl-[ACP] + L-alanine + H(+) = (8S)-8-amino-7-oxononanoate + holo-[ACP] + CO2. It participates in cofactor biosynthesis; biotin biosynthesis. Functionally, catalyzes the decarboxylative condensation of pimeloyl-[acyl-carrier protein] and L-alanine to produce 8-amino-7-oxononanoate (AON), [acyl-carrier protein], and carbon dioxide. The protein is 8-amino-7-oxononanoate synthase of Vibrio vulnificus (strain CMCP6).